An 853-amino-acid polypeptide reads, in one-letter code: Protein translocase subunit SecA 1 (853 aa).

ATP contacts are provided by residues Gln-85, Gly-103–Thr-107, and Asp-492.

It belongs to the SecA family. As to quaternary structure, monomer and homodimer. Part of the essential Sec protein translocation apparatus which comprises SecA, SecYEG and auxiliary proteins SecDF. Other proteins may also be involved.

Its subcellular location is the cell membrane. It is found in the cytoplasm. The catalysed reaction is ATP + H2O + cellular proteinSide 1 = ADP + phosphate + cellular proteinSide 2.. Part of the Sec protein translocase complex. Interacts with the SecYEG preprotein conducting channel. Has a central role in coupling the hydrolysis of ATP to the transfer of proteins into and across the cell membrane, serving as an ATP-driven molecular motor driving the stepwise translocation of polypeptide chains across the membrane. The polypeptide is Protein translocase subunit SecA 1 (Corynebacterium diphtheriae (strain ATCC 700971 / NCTC 13129 / Biotype gravis)).